A 429-amino-acid chain; its full sequence is Isocitrate dehydrogenase [NADP] (429 aa).

An NADP(+)-binding site is contributed by Thr108. D-threo-isocitrate contacts are provided by Ser117, Asn119, Arg123, Arg133, and Arg156. Asp308 is a binding site for Mg(2+). Residues 340 to 346, Asn353, Tyr393, and Arg397 each bind NADP(+); that span reads HGSAPKY.

Belongs to the isocitrate and isopropylmalate dehydrogenases family. In terms of assembly, homodimer. Mg(2+) serves as cofactor. Requires Mn(2+) as cofactor.

It carries out the reaction D-threo-isocitrate + NADP(+) = 2-oxoglutarate + CO2 + NADPH. Catalyzes the oxidative decarboxylation of isocitrate to 2-oxoglutarate and carbon dioxide with the concomitant reduction of NADP(+). The sequence is that of Isocitrate dehydrogenase [NADP] (icd) from Caldococcus noboribetus.